Here is a 186-residue protein sequence, read N- to C-terminus: Lipid A acyltransferase PagP (186 aa).

Positions 1-25 (MNVSKYVAIFSFVFIQLISVGKVFA) are cleaved as a signal peptide. Active-site residues include histidine 58, aspartate 101, and serine 102.

It belongs to the lipid A palmitoyltransferase family. In terms of assembly, homodimer.

The protein resides in the cell outer membrane. The enzyme catalyses a lipid A + a 1,2-diacyl-sn-glycero-3-phosphocholine = a hepta-acyl lipid A + a 2-acyl-sn-glycero-3-phosphocholine. It catalyses the reaction a lipid IVA + a 1,2-diacyl-sn-glycero-3-phosphocholine = a lipid IVB + a 2-acyl-sn-glycero-3-phosphocholine. It carries out the reaction a lipid IIA + a 1,2-diacyl-sn-glycero-3-phosphocholine = a lipid IIB + a 2-acyl-sn-glycero-3-phosphocholine. Functionally, transfers a fatty acid residue from the sn-1 position of a phospholipid to the N-linked hydroxyfatty acid chain on the proximal unit of lipid A or its precursors. The sequence is that of Lipid A acyltransferase PagP from Shigella flexneri serotype X (strain 2002017).